The sequence spans 155 residues: uncharacterized protein (155 aa).

2 disordered regions span residues 1–22 and 108–155; these read MSSQKGNVTRSRPQKHQNTFTF and PFNK…DTQA. Serine 2 carries the N-acetylserine modification. A phosphoserine mark is found at serine 136, serine 144, and serine 146. Acidic residues predominate over residues 136-155; the sequence is SDEDLDAESDSEGEDEDTQA.

This is an uncharacterized protein from Rattus norvegicus (Rat).